The primary structure comprises 49 residues: Large ribosomal subunit protein bL33B (49 aa).

Belongs to the bacterial ribosomal protein bL33 family.

The chain is Large ribosomal subunit protein bL33B from Shouchella clausii (strain KSM-K16) (Alkalihalobacillus clausii).